A 259-amino-acid chain; its full sequence is MMQKQNMIVVNQKEIAKNIYELVLQGTLVQQMNEPGQFVHIKVAEGIAPLLRRPISICNVDQEKNEFTMLYRAEGQGTKTLATRKQGEMVDVLGPLGHGFPVEEAEAGQTALLVGGGIGVSPLYELSQRLVAKGVRVIHILGFQTKDVVFYEEKFAELGDTYVATVDGTHGTKGFVTDVIDHYGIDFDILYSCGPLAMLRALEGRYKEKKAYISLEERMGCGIGACFACVCHLQEDPSGHSYKKVCSDGPVFPIGEVVL.

The 101-residue stretch at 2-102 folds into the FAD-binding FR-type domain; sequence MQKQNMIVVN…LGPLGHGFPV (101 aa). Residues 53–56, 70–72, and 77–78 each bind FAD; these read RPIS, LYR, and GT. [2Fe-2S] cluster-binding residues include C221, C226, C229, and C246.

The protein belongs to the PyrK family. In terms of assembly, heterotetramer of 2 PyrK and 2 PyrD type B subunits. The cofactor is [2Fe-2S] cluster. Requires FAD as cofactor.

The protein operates within pyrimidine metabolism; UMP biosynthesis via de novo pathway; orotate from (S)-dihydroorotate (NAD(+) route): step 1/1. Functionally, responsible for channeling the electrons from the oxidation of dihydroorotate from the FMN redox center in the PyrD type B subunit to the ultimate electron acceptor NAD(+). The polypeptide is Dihydroorotate dehydrogenase B (NAD(+)), electron transfer subunit (Bacillus cereus (strain Q1)).